The primary structure comprises 598 residues: IQ calmodulin-binding motif-containing protein 1 (598 aa).

The segment at 1 to 157 (MKPAGTDPRI…SLFWLLGGHV (157 aa)) is interaction with BBS1, BBS8 and BBS9. An interaction with CEP290, BBS1, BBS2, BBS4, BBS5, BBS7, BBS8 and BBS9 region spans residues 287 to 598 (QEVEEQKLHK…MLFIGGTKPP (312 aa)). IQ domains follow at residues 294–317 (LHKA…LKKL), 318–338 (PSAV…MMLE), 387–416 (EEKS…SLTE), and 417–437 (YKAA…CRKK). A coiled-coil region spans residues 336–362 (MLELNRQKEEEDLRLKLQLQRQRAMRL). Positions 530–598 (AEGKEPEQFL…MLFIGGTKPP (69 aa)) are interaction with BBS1, BBS2, BBS4, BBS7, BBS8 and BBS9.

As to quaternary structure, interacts with calmodulin. Interacts with CEP290/NPHP6; IQCB1/NPHP5 and CEP290/NPHP6; are proposed to form a functional NPHP5-6 module localized to the centrosome. Interacts with ATXN10. Interacts with NPHP1, INVS, NPHP4 and RPGRIP1L; these interactions likely require additional interactors. Associates with the BBSome complex; interacts with BBS1, BBS2, BBS4, BBS5, BBS7, BBS8 and BBS9. As to expression, localized to the outer segment and connecting cilia of photoreceptor cells.

The protein localises to the cytoplasm. It localises to the cytoskeleton. The protein resides in the microtubule organizing center. Its subcellular location is the centrosome. Functionally, involved in ciliogenesis. The function in an early step in cilia formation depends on its association with CEP290/NPHP6. Involved in regulation of the BBSome complex integrity, specifically for presence of BBS2 and BBS5 in the complex, and in ciliary targeting of selected BBSome cargos. May play a role in controlling entry of the BBSome complex to cilia possibly implicating CEP290/NPHP6. In Mus musculus (Mouse), this protein is IQ calmodulin-binding motif-containing protein 1 (Iqcb1).